Consider the following 625-residue polypeptide: Autophagy-related protein 13b (625 aa).

Low complexity-rich tracts occupy residues 322-332 (PSVSCSPSPTR) and 455-477 (PSGV…SSRS). Disordered stretches follow at residues 322–388 (PSVS…AVPR), 452–527 (FRRP…YPKK), and 544–564 (PPLR…NNNK). The segment covering 498 to 518 (ITDRNSRPGSFDHRGDIHEPF) has biased composition (basic and acidic residues).

The protein belongs to the ATG13 family. Plant subfamily.

Its subcellular location is the cytoplasmic vesicle. The protein localises to the autophagosome. Its function is as follows. Involved in autophagy in a nutritional condition dependent manner. The ATG1-ATG13 protein kinase complex regulates downstream events required for autophagosome enclosure and/or vacuolar delivery. Becomes a target of autophagy under nutrient starvation. Connects autophagy to plant nutritional status. The chain is Autophagy-related protein 13b from Arabidopsis thaliana (Mouse-ear cress).